The following is a 505-amino-acid chain: ATP synthase subunit alpha (505 aa).

170–177 (GDRQTGKT) provides a ligand contact to ATP.

It belongs to the ATPase alpha/beta chains family. F-type ATPases have 2 components, CF(1) - the catalytic core - and CF(0) - the membrane proton channel. CF(1) has five subunits: alpha(3), beta(3), gamma(1), delta(1), epsilon(1). CF(0) has four main subunits: a(1), b(1), b'(1) and c(9-12).

It is found in the cellular thylakoid membrane. The catalysed reaction is ATP + H2O + 4 H(+)(in) = ADP + phosphate + 5 H(+)(out). Its function is as follows. Produces ATP from ADP in the presence of a proton gradient across the membrane. The alpha chain is a regulatory subunit. The polypeptide is ATP synthase subunit alpha (Prochlorococcus marinus (strain MIT 9313)).